Here is a 307-residue protein sequence, read N- to C-terminus: Myoblast determination protein 1 homolog (307 aa).

Residues Asp-109–Leu-160 form the bHLH domain. The interval Thr-271 to Leu-307 is disordered.

In terms of assembly, efficient DNA binding requires dimerization with another bHLH protein. Expressed in fast and myotomal muscle. Very weak expression in brain, skin and gonads.

Its subcellular location is the nucleus. In terms of biological role, may act as a transcriptional activator that promotes transcription of muscle-specific target genes and plays a role in muscle differentiation. This is Myoblast determination protein 1 homolog (myod) from Takifugu rubripes (Japanese pufferfish).